The chain runs to 183 residues: Large ribosomal subunit protein uL6 (183 aa).

The protein belongs to the universal ribosomal protein uL6 family. Part of the 50S ribosomal subunit.

Functionally, this protein binds to the 23S rRNA, and is important in its secondary structure. It is located near the subunit interface in the base of the L7/L12 stalk, and near the tRNA binding site of the peptidyltransferase center. The protein is Large ribosomal subunit protein uL6 of Moorella thermoacetica (strain ATCC 39073 / JCM 9320).